A 117-amino-acid polypeptide reads, in one-letter code: Bomanin Bicipital 1 (117 aa).

An N-terminal signal peptide occupies residues 1–20 (MKCLILSFAIFVVLASQATA). Disulfide bonds link Cys29/Cys32 and Cys107/Cys110.

The protein belongs to the bomanin family. As to expression, hemolymph (at protein level).

It is found in the secreted. Functionally, secreted immune-induced peptide induced by Toll signaling. Has a role in resistance to bacterial and fungal infections. The polypeptide is Bomanin Bicipital 1 (Drosophila melanogaster (Fruit fly)).